We begin with the raw amino-acid sequence, 204 residues long: bMERB domain-containing protein 1 (204 aa).

In terms of domain architecture, bMERB spans 3-150 (LKQSLSTHLE…EQEEDKEMAD (148 aa)). The interval 162–187 (VTKSPASSRAEKKAEPPPSKPTVAKT) is disordered.

The chain is bMERB domain-containing protein 1 from Homo sapiens (Human).